Consider the following 152-residue polypeptide: Stigma-specific STIG1-like protein 1 (152 aa).

The first 19 residues, 1-19, serve as a signal peptide directing secretion; that stretch reads MAFVKLLVSIAITTAITIA.

The protein belongs to the STIG1 family.

This Arabidopsis thaliana (Mouse-ear cress) protein is Stigma-specific STIG1-like protein 1.